The primary structure comprises 206 residues: Peptidyl-tRNA hydrolase (206 aa).

A tRNA-binding site is contributed by Tyr14. Catalysis depends on His19, which acts as the Proton acceptor. TRNA is bound by residues Tyr64 and Asn66. The segment at 182 to 206 (FNQKNKKKKEKEQPEAATDQLLENK) is disordered.

Belongs to the PTH family. Monomer.

It is found in the cytoplasm. The enzyme catalyses an N-acyl-L-alpha-aminoacyl-tRNA + H2O = an N-acyl-L-amino acid + a tRNA + H(+). Its function is as follows. Hydrolyzes ribosome-free peptidyl-tRNAs (with 1 or more amino acids incorporated), which drop off the ribosome during protein synthesis, or as a result of ribosome stalling. Functionally, catalyzes the release of premature peptidyl moieties from peptidyl-tRNA molecules trapped in stalled 50S ribosomal subunits, and thus maintains levels of free tRNAs and 50S ribosomes. The protein is Peptidyl-tRNA hydrolase of Desulforamulus reducens (strain ATCC BAA-1160 / DSM 100696 / MI-1) (Desulfotomaculum reducens).